The chain runs to 73 residues: UPF0235 protein LBL_1291 (73 aa).

Belongs to the UPF0235 family.

The sequence is that of UPF0235 protein LBL_1291 from Leptospira borgpetersenii serovar Hardjo-bovis (strain L550).